The sequence spans 465 residues: Biotin biosynthesis bifunctional protein BioCD (465 aa).

Residues 1–254 are malonyl-ACP O-methyltransferase; sequence MTPFLPDRSI…AYGQWRKPRG (254 aa). Residues Asp-234 and 263–268 contribute to the ATP site; that span reads GVGKTL. The tract at residues 255–465 is DTB synthetase; sequence VFVTGTDTGV…DSLLSSNASR (211 aa). Thr-267 is a Mg(2+) binding site. Residue Lys-283 is part of the active site. Residue Thr-287 coordinates substrate. Residues Asp-295, 351–354, and 435–437 contribute to the ATP site; these read EGAG and PQL. The Mg(2+) site is built by Asp-295 and Glu-351.

It in the N-terminal section; belongs to the methyltransferase superfamily. In the C-terminal section; belongs to the dethiobiotin synthetase family. Mg(2+) is required as a cofactor.

It is found in the cytoplasm. It carries out the reaction (7R,8S)-7,8-diammoniononanoate + CO2 + ATP = (4R,5S)-dethiobiotin + ADP + phosphate + 3 H(+). The enzyme catalyses malonyl-[ACP] + S-adenosyl-L-methionine = malonyl-[ACP] methyl ester + S-adenosyl-L-homocysteine. It functions in the pathway cofactor biosynthesis; biotin biosynthesis; biotin from 7,8-diaminononanoate: step 1/2. Its pathway is cofactor biosynthesis; biotin biosynthesis. Converts the free carboxyl group of a malonyl-thioester to its methyl ester by transfer of a methyl group from S-adenosyl-L-methionine (SAM). It allows synthesis of pimeloyl-ACP via the fatty acid synthetic pathway. Its function is as follows. Catalyzes a mechanistically unusual reaction, the ATP-dependent insertion of CO2 between the N7 and N8 nitrogen atoms of 7,8-diaminopelargonic acid (DAPA, also called 7,8-diammoniononanoate) to form a ureido ring. This is Biotin biosynthesis bifunctional protein BioCD from Bordetella avium (strain 197N).